The primary structure comprises 123 residues: MKIKYFFIPLFSSAILFSACSSIQSDLRNLIKETTGKDFDVSKLIKTSEGRKNLINSLKKSYESKPDETASLLLIAWKQSAEMGEIGFDDIKEGGIYTRDNDPFKLEQKVEYFNMEYKILVMF.

The N-terminal stretch at 1-19 (MKIKYFFIPLFSSAILFSA) is a signal peptide. Cysteine 20 is lipidated: N-palmitoyl cysteine. Cysteine 20 carries S-diacylglycerol cysteine lipidation.

Belongs to the MG439/MG440 family.

It localises to the cell membrane. This is an uncharacterized protein from Mycoplasma pneumoniae (strain ATCC 29342 / M129 / Subtype 1) (Mycoplasmoides pneumoniae).